The chain runs to 107 residues: Magnetosome protein MmsF (107 aa).

Residues 1 to 13 lie on the Cytoplasmic side of the membrane; the sequence is MTEAILRSTLGAR. A helical membrane pass occupies residues 14 to 34; the sequence is TTVMAALSYLSVLCFVPLLVD. Residues 35-46 lie on the Lumenal side of the membrane; it reads RDDEFVYFHAKQ. A helical transmembrane segment spans residues 47–67; sequence GLVIWMWGVLALFALHVPVLG. The Cytoplasmic portion of the chain corresponds to 68 to 69; sequence KW. The helical transmembrane segment at 70 to 90 threads the bilayer; it reads IFGFSSMGVLVFSLLGLVSVV. The Lumenal segment spans residues 91-107; sequence FQRAWKLPLISWVAHRI.

It belongs to the magnetosome MamF/MmsF protein family. May oligomerize.

The protein localises to the magnetosome membrane. Its function may be negatively regulated by one of the MamGFDC proteins. Functionally, plays a major role in synthesis of cubooctahedral magnetite crystals by controlling crystal growth and morphology after nucleation. Has a partially redundant function with MamF. When overexpressed in E.coli the soluble protein self assembles into shells of about 36 nm. This protein mediates the formation of magnetite nanoparticles from a solution of Fe(2+) and Fe(3+) sulfate; the crystals are larger and lack alternative iron oxide/oxyhydroxide species seen in the protein's absence. The polypeptide is Magnetosome protein MmsF (Paramagnetospirillum magneticum (strain ATCC 700264 / AMB-1) (Magnetospirillum magneticum)).